A 251-amino-acid polypeptide reads, in one-letter code: Ribonuclease PH (251 aa).

Residues Arg90 and 128-130 (GTR) contribute to the phosphate site.

Belongs to the RNase PH family. As to quaternary structure, homohexameric ring arranged as a trimer of dimers.

It carries out the reaction tRNA(n+1) + phosphate = tRNA(n) + a ribonucleoside 5'-diphosphate. Its function is as follows. Phosphorolytic 3'-5' exoribonuclease that plays an important role in tRNA 3'-end maturation. Removes nucleotide residues following the 3'-CCA terminus of tRNAs; can also add nucleotides to the ends of RNA molecules by using nucleoside diphosphates as substrates, but this may not be physiologically important. Probably plays a role in initiation of 16S rRNA degradation (leading to ribosome degradation) during starvation. In Leifsonia xyli subsp. xyli (strain CTCB07), this protein is Ribonuclease PH.